The chain runs to 324 residues: tRNA dimethylallyltransferase (324 aa).

17–24 (GPTASGKT) is a binding site for ATP. 19-24 (TASGKT) serves as a coordination point for substrate. Interaction with substrate tRNA regions lie at residues 42–45 (DSAL), 166–170 (QRIQR), 251–256 (RCVGYR), and 284–291 (KRQITWLR).

The protein belongs to the IPP transferase family. Monomer. Requires Mg(2+) as cofactor.

The enzyme catalyses adenosine(37) in tRNA + dimethylallyl diphosphate = N(6)-dimethylallyladenosine(37) in tRNA + diphosphate. Its function is as follows. Catalyzes the transfer of a dimethylallyl group onto the adenine at position 37 in tRNAs that read codons beginning with uridine, leading to the formation of N6-(dimethylallyl)adenosine (i(6)A). This chain is tRNA dimethylallyltransferase, found in Burkholderia lata (strain ATCC 17760 / DSM 23089 / LMG 22485 / NCIMB 9086 / R18194 / 383).